A 416-amino-acid polypeptide reads, in one-letter code: E3 ubiquitin-protein ligase DMA1 (416 aa).

Positions 1–30 (MSTNTVPSSPPNQTPPAASGIATSHDHTKF) are disordered. Residues lysine 150, lysine 204, lysine 217, lysine 237, lysine 240, lysine 260, lysine 300, lysine 306, lysine 313, and lysine 317 each participate in a glycyl lysine isopeptide (Lys-Gly) (interchain with G-Cter in ubiquitin) cross-link. The 64-residue stretch at 189–252 (IIIGRYTERV…SGTFLNHQRL (64 aa)) folds into the FHA domain. An RING-type zinc finger spans residues 327 to 371 (CSICLNKIKPCQAIFISPCAHSWHFHCVRRLVIMNYPQFMCPNCR).

This sequence belongs to the DMA1 family. Interacts with CDC123. Interacts with PCL1. UBC4-dependent autoubiquitination occurs at Lys-150, Lys-204, Lys-217, Lys-237, Lys-240, Lys-260, Lys-300, Lys-306, Lys-313 and Lys-317. UBC4-dependent autoubiquitination is responsible for DMA2 turnover. UBC13/MMS2-dependent autoubiquitination occurs at Lys-237 and Lys-306. Lys-204 and Lys-306 are also ubiquitinated in trans by DMA2 E3 ligase in association with UBC4.

The protein resides in the cytoplasm. It catalyses the reaction S-ubiquitinyl-[E2 ubiquitin-conjugating enzyme]-L-cysteine + [acceptor protein]-L-lysine = [E2 ubiquitin-conjugating enzyme]-L-cysteine + N(6)-ubiquitinyl-[acceptor protein]-L-lysine.. E3 ubiquitin-protein ligase which functions in cell cycle retarding in conjunction with the UBC4 and UBC13/MMS2 complex, 2 E2 ubiquitin conjugating enzymes. Involved in nutritional control of the cell cycle. Targets the G1 cyclin PCL1 for destruction. Required for proper spindle positioning, likely regulating septin ring deposition at the bud neck. This is E3 ubiquitin-protein ligase DMA1 from Saccharomyces cerevisiae (strain ATCC 204508 / S288c) (Baker's yeast).